An 842-amino-acid chain; its full sequence is Elongation factor 2 (842 aa).

Residues 17–253 (SNVRNMSVIA…LWGENYFNPK (237 aa)) enclose the tr-type G domain. Residues 26–33 (AHVDHGKS), 104–108 (DSPGH), and 158–161 (NKVD) contribute to the GTP site. Serine 568 carries the phosphoserine modification. Residue threonine 574 is modified to Phosphothreonine. At histidine 699 the chain carries Diphthamide.

This sequence belongs to the TRAFAC class translation factor GTPase superfamily. Classic translation factor GTPase family. EF-G/EF-2 subfamily.

The protein resides in the cytoplasm. In terms of biological role, catalyzes the GTP-dependent ribosomal translocation step during translation elongation. During this step, the ribosome changes from the pre-translocational (PRE) to the post-translocational (POST) state as the newly formed A-site-bound peptidyl-tRNA and P-site-bound deacylated tRNA move to the P and E sites, respectively. Catalyzes the coordinated movement of the two tRNA molecules, the mRNA and conformational changes in the ribosome. This chain is Elongation factor 2 (eft201), found in Schizosaccharomyces pombe (strain 972 / ATCC 24843) (Fission yeast).